The chain runs to 660 residues: V-type ATP synthase subunit I (660 aa).

7 helical membrane passes run 312–332 (FFAF…GLLF), 362–382 (ILGL…GMSF), 453–473 (FIDN…LSLG), 485–505 (IGWI…LGTV), 520–540 (GQIG…LAMI), 560–580 (VLSY…GATF), and 593–613 (SIVI…GGVI).

This sequence belongs to the V-ATPase 116 kDa subunit family.

It is found in the cell membrane. Produces ATP from ADP in the presence of a proton gradient across the membrane. This is V-type ATP synthase subunit I (atpI) from Chlamydia pneumoniae (Chlamydophila pneumoniae).